Reading from the N-terminus, the 573-residue chain is Putative ATP-dependent RNA helicase R563 (573 aa).

The Helicase ATP-binding domain maps to 57-233 (INPKTPYKGL…ALTMNLLVRN (177 aa)). Residue 70–77 (HRIGAGKT) participates in ATP binding. A DEAH box motif is present at residues 179–182 (DEVH). The Helicase C-terminal domain occupies 374–551 (KILRKIKRCN…AFEKALKEAA (178 aa)).

The protein belongs to the DEAD box helicase family. DEAH subfamily.

The protein resides in the virion. The enzyme catalyses ATP + H2O = ADP + phosphate + H(+). The protein is Putative ATP-dependent RNA helicase R563 of Acanthamoeba polyphaga mimivirus (APMV).